The primary structure comprises 232 residues: Ubiquinone biosynthesis O-methyltransferase (232 aa).

Residues Arg36, Gly55, Asp76, and Met120 each coordinate S-adenosyl-L-methionine.

This sequence belongs to the methyltransferase superfamily. UbiG/COQ3 family.

The catalysed reaction is a 3-demethylubiquinol + S-adenosyl-L-methionine = a ubiquinol + S-adenosyl-L-homocysteine + H(+). It carries out the reaction a 3-(all-trans-polyprenyl)benzene-1,2-diol + S-adenosyl-L-methionine = a 2-methoxy-6-(all-trans-polyprenyl)phenol + S-adenosyl-L-homocysteine + H(+). It participates in cofactor biosynthesis; ubiquinone biosynthesis. Functionally, O-methyltransferase that catalyzes the 2 O-methylation steps in the ubiquinone biosynthetic pathway. This chain is Ubiquinone biosynthesis O-methyltransferase, found in Chromobacterium violaceum (strain ATCC 12472 / DSM 30191 / JCM 1249 / CCUG 213 / NBRC 12614 / NCIMB 9131 / NCTC 9757 / MK).